Here is a 234-residue protein sequence, read N- to C-terminus: Peptidase E (234 aa).

Catalysis depends on charge relay system residues Ser-123, Asp-138, and His-160.

It belongs to the peptidase S51 family.

The protein localises to the cytoplasm. The catalysed reaction is Dipeptidase E catalyzes the hydrolysis of dipeptides Asp-|-Xaa. It does not act on peptides with N-terminal Glu, Asn or Gln, nor does it cleave isoaspartyl peptides.. Functionally, hydrolyzes dipeptides containing N-terminal aspartate residues. May play a role in allowing the cell to use peptide aspartate to spare carbon otherwise required for the synthesis of the aspartate family of amino acids. The protein is Peptidase E of Haemophilus influenzae (strain PittGG).